A 578-amino-acid chain; its full sequence is Probable arginine--tRNA ligase, mitochondrial (578 aa).

Residues 1-16 constitute a mitochondrion transit peptide; sequence MACGFRRAIACQLSRV. L-arginine is bound by residues 133–135, H144, Y322, D326, and Q350; that span reads SPN. Positions 133 to 144 match the 'HIGH' region motif; it reads SPNVAKKFHVGH. K568 carries the post-translational modification N6-acetyllysine.

This sequence belongs to the class-I aminoacyl-tRNA synthetase family.

Its subcellular location is the mitochondrion membrane. The catalysed reaction is tRNA(Arg) + L-arginine + ATP = L-arginyl-tRNA(Arg) + AMP + diphosphate. Its function is as follows. Catalyzes the attachment of arginine to tRNA(Arg) in a two-step reaction: arginine is first activated by ATP to form Arg-AMP and then transferred to the acceptor end of tRNA(Arg). In Homo sapiens (Human), this protein is Probable arginine--tRNA ligase, mitochondrial (RARS2).